The sequence spans 329 residues: Lipoyl synthase (329 aa).

The [4Fe-4S] cluster site is built by Cys-55, Cys-60, Cys-66, Cys-81, Cys-85, Cys-88, and Ser-292. The region spanning 67–281 (WEDREATFLI…KAEAEAIGFL (215 aa)) is the Radical SAM core domain.

This sequence belongs to the radical SAM superfamily. Lipoyl synthase family. It depends on [4Fe-4S] cluster as a cofactor.

It localises to the cytoplasm. The catalysed reaction is [[Fe-S] cluster scaffold protein carrying a second [4Fe-4S](2+) cluster] + N(6)-octanoyl-L-lysyl-[protein] + 2 oxidized [2Fe-2S]-[ferredoxin] + 2 S-adenosyl-L-methionine + 4 H(+) = [[Fe-S] cluster scaffold protein] + N(6)-[(R)-dihydrolipoyl]-L-lysyl-[protein] + 4 Fe(3+) + 2 hydrogen sulfide + 2 5'-deoxyadenosine + 2 L-methionine + 2 reduced [2Fe-2S]-[ferredoxin]. Its pathway is protein modification; protein lipoylation via endogenous pathway; protein N(6)-(lipoyl)lysine from octanoyl-[acyl-carrier-protein]: step 2/2. Functionally, catalyzes the radical-mediated insertion of two sulfur atoms into the C-6 and C-8 positions of the octanoyl moiety bound to the lipoyl domains of lipoate-dependent enzymes, thereby converting the octanoylated domains into lipoylated derivatives. The polypeptide is Lipoyl synthase (Clavibacter sepedonicus (Clavibacter michiganensis subsp. sepedonicus)).